A 536-amino-acid polypeptide reads, in one-letter code: Testis-specific protein 10-interacting protein (536 aa).

3 disordered regions span residues 1-94, 185-234, and 246-305; these read MLNT…LFSS, SQGL…PGQG, and MEEE…FKGP. The segment covering 48–64 has biased composition (low complexity); the sequence is SGDSLQSQSCQQQRSYS. A compositionally biased stretch (basic residues) spans 71–83; it reads KERKPRRRNKKGR. Residues 375–451 are a coiled coil; it reads QAWEQQQLKE…LQGIQHRVQA (77 aa). Residues 491–536 form a disordered region; the sequence is GNAEGIPRKHRSYRSFGVEMESSPQSPPKTEPTSSQPGRHPSPTLD.

In Rattus norvegicus (Rat), this protein is Testis-specific protein 10-interacting protein (Tsga10ip).